A 380-amino-acid chain; its full sequence is Flap endonuclease 1 (380 aa).

The segment at Met-1 to Arg-104 is N-domain. Mg(2+) is bound at residue Asp-34. DNA contacts are provided by Arg-47 and Arg-70. Residues Asp-86, Glu-158, Glu-160, Asp-179, and Asp-181 each coordinate Mg(2+). Residues Asn-122–His-253 form an I-domain region. Glu-158 serves as a coordination point for DNA. DNA is bound by residues Gly-231 and Asp-233. Asp-233 lines the Mg(2+) pocket. A disordered region spans residues Lys-327–Lys-380. Polar residues predominate over residues Arg-332–Ser-351. The interval Thr-336–Phe-344 is interaction with PCNA.

This sequence belongs to the XPG/RAD2 endonuclease family. FEN1 subfamily. Interacts with PCNA. Three molecules of fen1 bind to one PCNA trimer with each molecule binding to one PCNA monomer. PCNA stimulates the nuclease activity without altering cleavage specificity. It depends on Mg(2+) as a cofactor. Post-translationally, phosphorylated. Phosphorylation upon DNA damage induces relocalization to the nuclear plasma.

Its subcellular location is the nucleus. The protein resides in the nucleolus. It localises to the nucleoplasm. The protein localises to the mitochondrion. In terms of biological role, structure-specific nuclease with 5'-flap endonuclease and 5'-3' exonuclease activities involved in DNA replication and repair. During DNA replication, cleaves the 5'-overhanging flap structure that is generated by displacement synthesis when DNA polymerase encounters the 5'-end of a downstream Okazaki fragment. It enters the flap from the 5'-end and then tracks to cleave the flap base, leaving a nick for ligation. Also involved in the long patch base excision repair (LP-BER) pathway, by cleaving within the apurinic/apyrimidinic (AP) site-terminated flap. Acts as a genome stabilization factor that prevents flaps from equilibrating into structures that lead to duplications and deletions. Also possesses 5'-3' exonuclease activity on nicked or gapped double-stranded DNA, and exhibits RNase H activity. Also involved in replication and repair of rDNA and in repairing mitochondrial DNA. The protein is Flap endonuclease 1 (fen1) of Xiphophorus maculatus (Southern platyfish).